Reading from the N-terminus, the 510-residue chain is Zinc metalloproteinase (510 aa).

The first 24 residues, 1–24 (MKSKLICIIMVIAFQAHFTMTVKA), serve as a signal peptide directing secretion. A propeptide spanning residues 25-200 (DSVGEEKLQN…ILKKQNMLSE (176 aa)) is cleaved from the precursor. H349 provides a ligand contact to Zn(2+). E350 is an active-site residue. Zn(2+) contacts are provided by H353 and E373. H437 acts as the Proton donor in catalysis.

It belongs to the peptidase M4 family. It depends on Zn(2+) as a cofactor.

The protein resides in the secreted. Its function is as follows. Probably linked to the pathogenesis of listerial infection. In Listeria monocytogenes serovar 1/2a (strain ATCC BAA-679 / EGD-e), this protein is Zinc metalloproteinase (mpl).